The primary structure comprises 99 residues: UPF0751 protein BAMEG_A0107 (99 aa).

This sequence belongs to the UPF0751 family.

The protein is UPF0751 protein BAMEG_A0107 of Bacillus anthracis (strain CDC 684 / NRRL 3495).